The primary structure comprises 198 residues: Protein GrpE (198 aa).

Residues 1–56 (MVEKKKSQAEKNNQSATEEEIEKAVKGSKRDSNAADEKNSASAAASSSAVSDAEPA) form a disordered region. The segment covering 22-39 (EKAVKGSKRDSNAADEKN) has biased composition (basic and acidic residues). The span at 40–56 (SASAAASSSAVSDAEPA) shows a compositional bias: low complexity.

Belongs to the GrpE family. As to quaternary structure, homodimer.

Its subcellular location is the cytoplasm. In terms of biological role, participates actively in the response to hyperosmotic and heat shock by preventing the aggregation of stress-denatured proteins, in association with DnaK and GrpE. It is the nucleotide exchange factor for DnaK and may function as a thermosensor. Unfolded proteins bind initially to DnaJ; upon interaction with the DnaJ-bound protein, DnaK hydrolyzes its bound ATP, resulting in the formation of a stable complex. GrpE releases ADP from DnaK; ATP binding to DnaK triggers the release of the substrate protein, thus completing the reaction cycle. Several rounds of ATP-dependent interactions between DnaJ, DnaK and GrpE are required for fully efficient folding. The chain is Protein GrpE from Oenococcus oeni (strain ATCC BAA-331 / PSU-1).